Here is a 1938-residue protein sequence, read N- to C-terminus: Myosin heavy chain, striated muscle (1938 aa).

Positions 29–79 (DGKKNCWVPDEKEGFASAEIQSSKGDEITVKIVADSSTRTVKKDDIQSMNP) constitute a Myosin N-terminal SH3-like domain. Residues 83–775 (EKLEDMANMT…VLGNLEEMRD (693 aa)) form the Myosin motor domain. ATP is bound at residue 176 to 183 (GESGAGKT). The segment at 653 to 675 (LNKLMKNLYSTHPHFVRCIIPNE) is actin-binding. Positions 778-805 (LSKIISMFQAHIRGYLIRKAYKKLQDQR) constitute an IQ domain. The interval 836-1938 (LLSIARQEEE…RSSVSVSASN (1103 aa)) is rodlike tail (S2 and LMM domains). A coiled-coil region spans residues 836-1938 (LLSIARQEEE…RSSVSVSASN (1103 aa)). Basic and acidic residues-rich tracts occupy residues 1041–1058 (VRGD…DLKS) and 1212–1225 (SKLE…KREM). Disordered stretches follow at residues 1041 to 1062 (VRGD…TQEN), 1187 to 1332 (SALR…EVRN), 1344 to 1363 (LEEE…KANN), and 1898 to 1938 (HELE…SASN). A compositionally biased stretch (polar residues) spans 1265 to 1285 (RSINELQSQKSRLQAENSDLT). Basic and acidic residues-rich tracts occupy residues 1286–1303 (RQLE…KEKS), 1310–1332 (EDAR…EVRN), and 1344–1354 (LEEEQESKSDV). Residues 1922-1938 (RSSVSVQRSSVSVSASN) show a composition bias toward low complexity.

Belongs to the TRAFAC class myosin-kinesin ATPase superfamily. Myosin family. As to quaternary structure, muscle myosin is a hexameric protein that consists of 2 heavy chain subunits (MHC), 2 alkali light chain subunits (MLC) and 2 regulatory light chain subunits (MLC-2).

The protein localises to the cytoplasm. Its subcellular location is the myofibril. Its function is as follows. Muscle contraction. Myosin is a protein that binds to F-actin and has ATPase activity that is activated by F-actin. The protein is Myosin heavy chain, striated muscle of Argopecten irradians (Bay scallop).